The primary structure comprises 594 residues: Invasin CotH2 (594 aa).

The first 19 residues, 1-19 (MKLSLTIVSSSFLVAIAHA), serve as a signal peptide directing secretion. 7 N-linked (GlcNAc...) asparagine glycosylation sites follow: Asn-77, Asn-162, Asn-226, Asn-316, Asn-441, Asn-519, and Asn-533. The interval 529-565 (PPAANGTATSTNDGGNTHTAAGESKPASSSESSGSKI) is disordered. The span at 534–547 (GTATSTNDGGNTHT) shows a compositional bias: polar residues. Residues 548 to 565 (AAGESKPASSSESSGSKI) are compositionally biased toward low complexity. Residue Ser-571 is the site of GPI-anchor amidated serine attachment. Residues 572–594 (GASRSAVSTVLLGVTALVATAIF) constitute a propeptide, removed in mature form.

As to quaternary structure, interacts with host epithelial cell surface HSPA5/BiP protein.

It is found in the cell membrane. Its function is as follows. Promotes invasion of host epithelial cells by adhering to receptors on the host cell surface to facilitate endocytosis of the pathogen into host cells. Binds HSPA5/BiP protein on the cell surface of host epithelial cells. This Rhizopus delemar (strain RA 99-880 / ATCC MYA-4621 / FGSC 9543 / NRRL 43880) (Mucormycosis agent) protein is Invasin CotH2.